A 478-amino-acid chain; its full sequence is Bifunctional protein HldE (478 aa).

Residues 1-318 (MKITLPDFTR…ENAIHARPES (318 aa)) form a ribokinase region. ATP is bound at residue 195–198 (NLSE). Asp-264 is an active-site residue. The interval 344–478 (MTNGVFDILH…KTIISGSGKN (135 aa)) is cytidylyltransferase.

In the N-terminal section; belongs to the carbohydrate kinase PfkB family. It in the C-terminal section; belongs to the cytidylyltransferase family. Homodimer.

The enzyme catalyses D-glycero-beta-D-manno-heptose 7-phosphate + ATP = D-glycero-beta-D-manno-heptose 1,7-bisphosphate + ADP + H(+). The catalysed reaction is D-glycero-beta-D-manno-heptose 1-phosphate + ATP + H(+) = ADP-D-glycero-beta-D-manno-heptose + diphosphate. It participates in nucleotide-sugar biosynthesis; ADP-L-glycero-beta-D-manno-heptose biosynthesis; ADP-L-glycero-beta-D-manno-heptose from D-glycero-beta-D-manno-heptose 7-phosphate: step 1/4. It functions in the pathway nucleotide-sugar biosynthesis; ADP-L-glycero-beta-D-manno-heptose biosynthesis; ADP-L-glycero-beta-D-manno-heptose from D-glycero-beta-D-manno-heptose 7-phosphate: step 3/4. In terms of biological role, catalyzes the phosphorylation of D-glycero-D-manno-heptose 7-phosphate at the C-1 position to selectively form D-glycero-beta-D-manno-heptose-1,7-bisphosphate. Functionally, catalyzes the ADP transfer from ATP to D-glycero-beta-D-manno-heptose 1-phosphate, yielding ADP-D-glycero-beta-D-manno-heptose. The sequence is that of Bifunctional protein HldE from Erwinia tasmaniensis (strain DSM 17950 / CFBP 7177 / CIP 109463 / NCPPB 4357 / Et1/99).